Consider the following 239-residue polypeptide: uncharacterized protein (239 aa).

A run of 8 helical transmembrane segments spans residues 4–24 (LIPKQHGAWAMLLIPFLLGMV), 29–49 (VIWHIPLFLGWLFLYLAVYPV), 61–81 (YQKWMCYYGFPTCCFLMISVF), 84–104 (PPLIWVGVSLLPLFLIHMYFA), 116–136 (VAGVLFFCSGGFASCWLGMGT), 139–159 (GWAWFIFLQSALFFIGSSFYV), 180–200 (LLLPFLSALFGAGWAFLAFIP), and 218–238 (IGILEIVNACFFLAVMCLFIT).

The protein to H.influenzae HI_1626.

Its subcellular location is the cell membrane. This is an uncharacterized protein from Bacillus subtilis (strain 168).